Reading from the N-terminus, the 526-residue chain is Calcium-dependent protein kinase 28 (526 aa).

The segment at 1 to 37 (MQPDPQPHGRGREKAAGAGPRLPPPVTAPSVGRPASV) is disordered. Residues 49 to 307 (YRIGKKLGQG…AHEVLCHPWI (259 aa)) enclose the Protein kinase domain. ATP is bound by residues 55 to 63 (LGQGQFGTT) and Lys78. Asp173 functions as the Proton acceptor in the catalytic mechanism. Residues 313–343 (APDKPIDSAVLSRLKHFSAMNKLKKMALRVI) form an autoinhibitory domain region. 4 EF-hand domains span residues 350–385 (EEIG…VGSD), 386–421 (LMEP…MNKL), 422–457 (EREE…FGLS), and 460–491 (HLED…GNAG). Residues Asp363, Asp365, Ser367, Thr369, Glu374, Asp399, Asp401, Ser403, Thr405, Glu410, Asp435, Asp437, Ser439, Glu446, Asp469, Asn471, Asp473, Gln475, and Glu480 each coordinate Ca(2+).

Belongs to the protein kinase superfamily. Ser/Thr protein kinase family. CDPK subfamily.

It catalyses the reaction L-seryl-[protein] + ATP = O-phospho-L-seryl-[protein] + ADP + H(+). It carries out the reaction L-threonyl-[protein] + ATP = O-phospho-L-threonyl-[protein] + ADP + H(+). With respect to regulation, activated by calcium. Autophosphorylation may play an important role in the regulation of the kinase activity. Its function is as follows. May play a role in signal transduction pathways that involve calcium as a second messenger. The chain is Calcium-dependent protein kinase 28 from Oryza sativa subsp. japonica (Rice).